The sequence spans 387 residues: Radial spoke protein 14 (387 aa).

ARM repeat units follow at residues 24–67, 69–109, 111–150, 154–198, 204–244, 245–286, 289–328, and 330–370; these read KALP…ELLS, PVNH…LLAA, EVGA…EAAR, TRRA…TCTQ, GILS…ALAT, REDA…AITI, EGKY…NVAE, and PEAR…QCRF.

It belongs to the flagellar radial spoke RSP14 family.

The protein localises to the cytoplasm. It localises to the cytoskeleton. Its subcellular location is the flagellum axoneme. This Chlamydomonas reinhardtii (Chlamydomonas smithii) protein is Radial spoke protein 14 (RSP14).